The chain runs to 1167 residues: MSLRFLLGRSGSGKTTACLEEIRRQLQEDPKGRTIVYLVPEQMTFQCEYALIHTEGTEGMIRAQVFSFPRLAWRVLQETGGMNRYHVHDVGVQMMIRKIIEQRKQELKLFGRAADKSGFVEQLHEMIAECKRYCLTPDELRRHAGVLESGSGQPGRRLLADKLSDVALVYEELERSLLGHYLDSEDYLRLLVEHIPRSSYLHGADIYIDGFHHFSPQEYMVIEQLLHRCRRVTVCLTADRPYDVGMPDELDLFYLPAQTYRQLRELALANDIMIESPVVLSVNRRHQDKALAHLEEQFHRRPLLPYEAETDAICLYEAANRRAEIEAVAREIIRLVRDEGARYRDIALIIRQTEAYRDLVKTVFFDFDIPYFMDEKEPMHYHPLIELVRAALETVVTRWRYEAVFRAVKTDLLFPVDGDLAMWREAADKLENYVLAHGVKGEKWTSDERWTYRRYQALDGLNVPQTDEERQFEDKLNEWREALAAPLRRLERRLRRAADGRGLCTALYLFLEELQIPKKLEQMSAQAEADGRLVEARQHEQAWNAVVDLLDQYVEMLGAEPLPLAEFAKIIEAGLDRLEFALVPPAIDQVIVAQLDRSRLIDVKYAFIIGVNDGVIPAKVKDEGLVAEVEREQLRELGVALAPGGREQLFYDPFFVYLALACPSRRLYVTYPLADGEGKALMPSPLIKQLVQLFPRVSVHLCGNDPFDAPEEKPETFVTVPRATQTYLISQLRAWKRNYGIDPLWWDVYNVLISHPEWRARVEQAVSGLFYTNQAVLKREWSRRLYGKKIQASVSRMEQFQKCPYAHFASHGLRLKERNVFRLEAPDVGQLFHAAIKQIADRVREQHLDWKQLSRSECERLSAEAVERIAPLIQQQVLSSSNRYEYMKRKLKNVVARTTHVLSEHARASGFAPVGFELSFGPGGDLPPLRFQLRDGTVMELVGRIDRVDKAESSQGVLLRIIDYKSSAKTLDLTEVYYGLALQMFTYLDIVLTYAEQLVGEPALPAGVLYFHIHNPIIQAKQWLDNEMEVARKLLEPFRMRGLLLADAETIRLMDSQTENGQWSLIVPAQLTRTGAIHSRSSVASASDFAALRQHVRRLFVDIGGQIADGVVSIAPYKLKNKTACEFCAFKPVCQFDEALSGNGYRKLTPQTKDAVIETLGKREEES.

The region spanning 1–359 (MSLRFLLGRS…IRQTEAYRDL (359 aa)) is the UvrD-like helicase ATP-binding domain. Residue 8 to 15 (GRSGSGKT) coordinates ATP. One can recognise a UvrD-like helicase C-terminal domain in the interval 282-588 (VNRRHQDKAL…EFALVPPAID (307 aa)). Residues cysteine 803, cysteine 1125, cysteine 1128, and cysteine 1134 each coordinate [4Fe-4S] cluster.

Belongs to the helicase family. AddB/RexB type 1 subfamily. As to quaternary structure, heterodimer of AddA and AddB. Mg(2+) is required as a cofactor. Requires [4Fe-4S] cluster as cofactor.

The heterodimer acts as both an ATP-dependent DNA helicase and an ATP-dependent, dual-direction single-stranded exonuclease. Recognizes the chi site generating a DNA molecule suitable for the initiation of homologous recombination. The AddB subunit has 5' -&gt; 3' nuclease activity but not helicase activity. The polypeptide is ATP-dependent helicase/deoxyribonuclease subunit B (Geobacillus thermodenitrificans (strain NG80-2)).